The primary structure comprises 427 residues: Glutamate-1-semialdehyde 2,1-aminomutase (427 aa).

Lys-267 carries the post-translational modification N6-(pyridoxal phosphate)lysine.

The protein belongs to the class-III pyridoxal-phosphate-dependent aminotransferase family. HemL subfamily. In terms of assembly, homodimer. It depends on pyridoxal 5'-phosphate as a cofactor.

It is found in the cytoplasm. The catalysed reaction is (S)-4-amino-5-oxopentanoate = 5-aminolevulinate. It participates in porphyrin-containing compound metabolism; protoporphyrin-IX biosynthesis; 5-aminolevulinate from L-glutamyl-tRNA(Glu): step 2/2. The protein is Glutamate-1-semialdehyde 2,1-aminomutase of Geotalea uraniireducens (strain Rf4) (Geobacter uraniireducens).